The primary structure comprises 243 residues: DNA repair protein RecO (243 aa).

This sequence belongs to the RecO family.

Involved in DNA repair and RecF pathway recombination. The chain is DNA repair protein RecO from Hyphomonas neptunium (strain ATCC 15444).